We begin with the raw amino-acid sequence, 1479 residues long: Putative receptor-type tyrosine-protein phosphatase mosPTP-1 (1479 aa).

Residues 1-28 (MKPRLLTTVTTWLALVLPVVYLSRPCQA) form the signal peptide. Residues 29-365 (LPTVNFTANY…RQSYNDYNLA (337 aa)) are Extracellular-facing. N-linked (GlcNAc...) asparagine glycosylation is found at asparagine 33, asparagine 40, asparagine 146, asparagine 182, asparagine 248, asparagine 294, and asparagine 306. 2 Fibronectin type-III domains span residues 143–242 (KPLN…AGPS) and 243–346 (APKV…VQLN). Residues 366-386 (VMIGILICCFGLLFIVLTILL) form a helical membrane-spanning segment. Residues 387–1479 (WKKCFHAAYY…AKLRAVVRVE (1093 aa)) lie on the Cytoplasmic side of the membrane. 2 consecutive Tyrosine-protein phosphatase domains span residues 452–717 (FSKE…LVEA) and 740–992 (IDSQ…LSYM). Catalysis depends on cysteine 658, which acts as the Phosphocysteine intermediate.

This sequence belongs to the protein-tyrosine phosphatase family. Receptor class subfamily. Interacts with C-type lectin mosGCTL-1. Interacts with C-type lectin mosGCTL-7.

Its subcellular location is the cell membrane. The enzyme catalyses O-phospho-L-tyrosyl-[protein] + H2O = L-tyrosyl-[protein] + phosphate. Functionally, putative protein tyrosine-protein phosphatase. In terms of biological role, (Microbial infection) Facilitates West Nile virus infection in mosquitoes. This chain is Putative receptor-type tyrosine-protein phosphatase mosPTP-1, found in Culex quinquefasciatus (Southern house mosquito).